The following is a 361-amino-acid chain: Phospho-N-acetylmuramoyl-pentapeptide-transferase (361 aa).

A run of 10 helical transmembrane segments spans residues 25 to 45, 72 to 92, 95 to 115, 133 to 153, 169 to 189, 200 to 220, 240 to 260, 264 to 284, 289 to 309, and 338 to 358; these read TGGA…WIIN, TPTM…VLWA, VNPY…VGFY, TRLL…VWLG, VVLN…VGAG, GLAI…AYLA, LAVL…FNAP, IFMG…IAVA, IVLA…IVQV, and QIVI…LATL.

Belongs to the glycosyltransferase 4 family. MraY subfamily. Mg(2+) serves as cofactor.

Its subcellular location is the cell inner membrane. It catalyses the reaction UDP-N-acetyl-alpha-D-muramoyl-L-alanyl-gamma-D-glutamyl-meso-2,6-diaminopimeloyl-D-alanyl-D-alanine + di-trans,octa-cis-undecaprenyl phosphate = di-trans,octa-cis-undecaprenyl diphospho-N-acetyl-alpha-D-muramoyl-L-alanyl-D-glutamyl-meso-2,6-diaminopimeloyl-D-alanyl-D-alanine + UMP. It participates in cell wall biogenesis; peptidoglycan biosynthesis. Functionally, catalyzes the initial step of the lipid cycle reactions in the biosynthesis of the cell wall peptidoglycan: transfers peptidoglycan precursor phospho-MurNAc-pentapeptide from UDP-MurNAc-pentapeptide onto the lipid carrier undecaprenyl phosphate, yielding undecaprenyl-pyrophosphoryl-MurNAc-pentapeptide, known as lipid I. The protein is Phospho-N-acetylmuramoyl-pentapeptide-transferase of Rhodopseudomonas palustris (strain BisB5).